The following is a 368-amino-acid chain: Alkaline phosphatase L (368 aa).

The signal sequence occupies residues M1 to A23.

The protein belongs to the PstS family. In terms of assembly, homodimer.

It localises to the secreted. The protein localises to the periplasm. The catalysed reaction is a phosphate monoester + H2O = an alcohol + phosphate. In terms of biological role, has both a phosphomonoesterase and phosphodiesterase activity. The polypeptide is Alkaline phosphatase L (Pseudomonas aeruginosa (strain ATCC 15692 / DSM 22644 / CIP 104116 / JCM 14847 / LMG 12228 / 1C / PRS 101 / PAO1)).